Consider the following 225-residue polypeptide: 2-C-methyl-D-erythritol 4-phosphate cytidylyltransferase (225 aa).

The protein belongs to the IspD/TarI cytidylyltransferase family. IspD subfamily.

The catalysed reaction is 2-C-methyl-D-erythritol 4-phosphate + CTP + H(+) = 4-CDP-2-C-methyl-D-erythritol + diphosphate. It participates in isoprenoid biosynthesis; isopentenyl diphosphate biosynthesis via DXP pathway; isopentenyl diphosphate from 1-deoxy-D-xylulose 5-phosphate: step 2/6. In terms of biological role, catalyzes the formation of 4-diphosphocytidyl-2-C-methyl-D-erythritol from CTP and 2-C-methyl-D-erythritol 4-phosphate (MEP). The protein is 2-C-methyl-D-erythritol 4-phosphate cytidylyltransferase of Cereibacter sphaeroides (strain ATCC 17029 / ATH 2.4.9) (Rhodobacter sphaeroides).